The sequence spans 854 residues: DNA topoisomerase 1 type prokaryotic (854 aa).

A Toprim domain is found at 2 to 110 (SILILLESPG…KRLRFNAITK (109 aa)). Mg(2+)-binding residues include E8 and D79. The 487-residue stretch at 124–610 (DKNLVDAQKA…DFYDKLKPIV (487 aa)) folds into the Topo IA-type catalytic domain. An interaction with DNA region spans residues 158–163 (SAGRVQ). The active-site O-(5'-phospho-DNA)-tyrosine intermediate is the Y302. The interval 802–854 (KSAPKGGSKTIRKPSQTKYSQTKSTKSTKSTKSTNKKFVGKSAKKTTKKTTKK) is disordered. The segment covering 814-834 (KPSQTKYSQTKSTKSTKSTKS) has biased composition (low complexity). Over residues 835–854 (TNKKFVGKSAKKTTKKTTKK) the composition is skewed to basic residues.

It belongs to the type IA topoisomerase family. The cofactor is Mg(2+).

It is found in the virion. The catalysed reaction is ATP-independent breakage of single-stranded DNA, followed by passage and rejoining.. In terms of biological role, releases the supercoiling and torsional tension of DNA, which is introduced during the DNA replication and transcription, by transiently cleaving and rejoining one strand of the DNA duplex. Introduces a single-strand break via transesterification at a target site in duplex DNA. The scissile phosphodiester is attacked by the catalytic tyrosine of the enzyme, resulting in the formation of a DNA-(5'-phosphotyrosyl)-enzyme intermediate and the expulsion of a 3'-OH DNA strand. The free DNA strand then undergoes passage around the unbroken strand, thus removing DNA supercoils. Finally, in the religation step, the DNA 3'-OH attacks the covalent intermediate to expel the active-site tyrosine and restore the DNA phosphodiester backbone. The sequence is that of DNA topoisomerase 1 type prokaryotic (TOP1P) from Acanthamoeba polyphaga (Amoeba).